A 206-amino-acid polypeptide reads, in one-letter code: MKSARTSRAWIKAHINDNFVRKANHEGYRSRAAYKLQEIAERDALFSPGMTVVDLGASPGSWSQVALESVGPTGKVFALDMLDMQSLPGATFIQGDFRENGVLAALEKVLDGKRADLVISDMSPNLTGIRVSDQAHGMYLAELALMFCREHLNPGENFLVKVFQGSDFEAFRQLMQADFAKVVIRKPKASRDRSKELYLLGLEKII.

Gly-60, Trp-62, Asp-80, Asp-96, and Asp-121 together coordinate S-adenosyl-L-methionine. Catalysis depends on Lys-161, which acts as the Proton acceptor.

It belongs to the class I-like SAM-binding methyltransferase superfamily. RNA methyltransferase RlmE family.

It is found in the cytoplasm. It carries out the reaction uridine(2552) in 23S rRNA + S-adenosyl-L-methionine = 2'-O-methyluridine(2552) in 23S rRNA + S-adenosyl-L-homocysteine + H(+). In terms of biological role, specifically methylates the uridine in position 2552 of 23S rRNA at the 2'-O position of the ribose in the fully assembled 50S ribosomal subunit. The polypeptide is Ribosomal RNA large subunit methyltransferase E (Nitrosomonas eutropha (strain DSM 101675 / C91 / Nm57)).